The sequence spans 382 residues: Calcium/calmodulin-dependent protein kinase (382 aa).

The 256-residue stretch at 23–278 (YKFGRTLGAG…SKEALGHIWL (256 aa)) folds into the Protein kinase domain. ATP-binding positions include 29–37 (LGAGTYGVV) and Lys-50. Asp-142 (proton acceptor) is an active-site residue. The interval 291–301 (ELEAYRRRARL) is calmodulin-binding. Disordered stretches follow at residues 318-344 (KEHE…GDGS) and 359-382 (QKQE…FSNA).

This sequence belongs to the protein kinase superfamily. CAMK Ser/Thr protein kinase family. CaMK subfamily.

It carries out the reaction L-seryl-[protein] + ATP = O-phospho-L-seryl-[protein] + ADP + H(+). The enzyme catalyses L-threonyl-[protein] + ATP = O-phospho-L-threonyl-[protein] + ADP + H(+). The sequence is that of Calcium/calmodulin-dependent protein kinase from Metarhizium anisopliae (Entomophthora anisopliae).